Consider the following 200-residue polypeptide: Protein-methionine-sulfoxide reductase heme-binding subunit MsrQ (200 aa).

Helical transmembrane passes span 8–28 (ITWL…WLFY), 54–74 (LLLA…PLLI), 79–99 (LLGL…SLLE), 116–136 (PYLT…LTSF), and 153–173 (FIYL…KILS).

It belongs to the MsrQ family. In terms of assembly, heterodimer of a catalytic subunit (MsrP) and a heme-binding subunit (MsrQ). Requires FMN as cofactor. Heme b serves as cofactor.

The protein resides in the cell inner membrane. Functionally, part of the MsrPQ system that repairs oxidized periplasmic proteins containing methionine sulfoxide residues (Met-O), using respiratory chain electrons. Thus protects these proteins from oxidative-stress damage caused by reactive species of oxygen and chlorine generated by the host defense mechanisms. MsrPQ is essential for the maintenance of envelope integrity under bleach stress, rescuing a wide series of structurally unrelated periplasmic proteins from methionine oxidation. MsrQ provides electrons for reduction to the reductase catalytic subunit MsrP, using the quinone pool of the respiratory chain. The sequence is that of Protein-methionine-sulfoxide reductase heme-binding subunit MsrQ from Cronobacter sakazakii (strain ATCC BAA-894) (Enterobacter sakazakii).